Consider the following 38-residue polypeptide: uncharacterized protein (38 aa).

This is an uncharacterized protein from Haemophilus influenzae (strain ATCC 51907 / DSM 11121 / KW20 / Rd).